A 118-amino-acid chain; its full sequence is Small ribosomal subunit protein uS13 (118 aa).

Residues 94 to 118 form a disordered region; that stretch reads SLPVRGQRTKTNARTRKGPRKPIKK.

It belongs to the universal ribosomal protein uS13 family. As to quaternary structure, part of the 30S ribosomal subunit. Forms a loose heterodimer with protein S19. Forms two bridges to the 50S subunit in the 70S ribosome.

Its function is as follows. Located at the top of the head of the 30S subunit, it contacts several helices of the 16S rRNA. In the 70S ribosome it contacts the 23S rRNA (bridge B1a) and protein L5 of the 50S subunit (bridge B1b), connecting the 2 subunits; these bridges are implicated in subunit movement. Contacts the tRNAs in the A and P-sites. The polypeptide is Small ribosomal subunit protein uS13 (Actinobacillus pleuropneumoniae serotype 5b (strain L20)).